Here is a 164-residue protein sequence, read N- to C-terminus: UPF0304 protein YfbU (164 aa).

Belongs to the UPF0304 family.

The sequence is that of UPF0304 protein YfbU from Shigella flexneri.